A 232-amino-acid chain; its full sequence is Ribosome maturation protein SDO1 homolog (232 aa).

Belongs to the SDO1/SBDS family.

The polypeptide is Ribosome maturation protein SDO1 homolog (Methanothermobacter thermautotrophicus (strain ATCC 29096 / DSM 1053 / JCM 10044 / NBRC 100330 / Delta H) (Methanobacterium thermoautotrophicum)).